The following is a 440-amino-acid chain: Ultraviolet-B receptor UVR8 (440 aa).

A2 is subject to N-acetylalanine. 8 RCC1 repeats span residues 2 to 31 (AEDM…VALL), 32 to 84 (SGDI…AYSQ), 86 to 137 (GMEV…AVTM), 139 to 189 (GEVQ…AVTE), 190 to 241 (DGDL…SVSY), 243 to 293 (GALY…ALTS), 294 to 345 (DGKL…AVTE), and 347 to 399 (NNVF…SGKS). Residues 397–423 (GKSWVSPAERYAVVPDETGLTDGSSKG) form a required for interaction with COP1 region. The segment at 413–440 (ETGLTDGSSKGNGGDISVPQTDVKRVRI) is disordered.

In terms of assembly, homodimer in the absence of UV-B, but absorption of UV-B induces monomerization of UVR8 and interaction with COP1. Interacts with RUP1, RUP2 and histone H2B.

It localises to the nucleus. Its subcellular location is the cytoplasm. It is found in the cytosol. Functionally, UV-B specific signaling component that acts as a UV-B photoreceptor and plays a key role in establishing UV-protective responses in plants. Upon UV-B irradiation, UVR8 undergoes an immediate switch from homodimer to monomer, accumulates in the nucleus, interacts with the photomorphogenic repressor COP1 and regulates the expression of the transcription factor HY5 by associating with chromatin (through histone H2B binding) in the HY5 promoter region. UVR8 is involved in controlling aspects of leaf growth and morphogenesis in response to UV-B, is required for normal progression of endocycle and has a regulatory role in stomatal differentiation. Is required for plant circadian clock response to photomorphogenic UV-B light, partly through the transcriptional activation of responsive clock genes. Promotes photosynthetic efficiency at elevated levels of UV-B. Plays a role in mediating the effects of UV-B radiation on pathogen resistance by controlling the expression of the sinapate biosynthetic pathway. The two tryptophans, Trp-285 and Trp-233, serve collectively as the UV-B chromophore. The protein is Ultraviolet-B receptor UVR8 of Arabidopsis thaliana (Mouse-ear cress).